The sequence spans 94 residues: Pyrimidine/purine nucleoside phosphorylase (94 aa).

Belongs to the nucleoside phosphorylase PpnP family.

It carries out the reaction a purine D-ribonucleoside + phosphate = a purine nucleobase + alpha-D-ribose 1-phosphate. The catalysed reaction is adenosine + phosphate = alpha-D-ribose 1-phosphate + adenine. It catalyses the reaction cytidine + phosphate = cytosine + alpha-D-ribose 1-phosphate. The enzyme catalyses guanosine + phosphate = alpha-D-ribose 1-phosphate + guanine. It carries out the reaction inosine + phosphate = alpha-D-ribose 1-phosphate + hypoxanthine. The catalysed reaction is thymidine + phosphate = 2-deoxy-alpha-D-ribose 1-phosphate + thymine. It catalyses the reaction uridine + phosphate = alpha-D-ribose 1-phosphate + uracil. The enzyme catalyses xanthosine + phosphate = alpha-D-ribose 1-phosphate + xanthine. Functionally, catalyzes the phosphorolysis of diverse nucleosides, yielding D-ribose 1-phosphate and the respective free bases. Can use uridine, adenosine, guanosine, cytidine, thymidine, inosine and xanthosine as substrates. Also catalyzes the reverse reactions. In Pseudomonas putida (strain GB-1), this protein is Pyrimidine/purine nucleoside phosphorylase.